Consider the following 671-residue polypeptide: Kinesin-like protein KIF2C (671 aa).

Residues 1 to 200 (MIDFDDVAAI…CHPLTMTDPI (200 aa)) are globular. The segment at 36–62 (KQKRRSVNSKIPAPKESLRTRSTRMST) is disordered. Ser-41 is subject to Phosphoserine; by AURKB. Residues 44–47 (SKIP) carry the Microtubule tip localization signal motif. 7 positions are modified to phosphoserine: Ser-52, Ser-57, Ser-61, Ser-112, Ser-121, Ser-133, and Ser-138. The interval 153 to 184 (EKKAQNSEMRMKRAQEYDSSFPNWEFARMIKE) is negative regulator of microtubule-binding. 2 disulfide bridges follow: Cys-191/Cys-233 and Cys-290/Cys-506. The region spanning 204–534 (RICVCVRKRP…LRYADRVKEL (331 aa)) is the Kinesin motor domain. ATP is bound at residue 294 to 301 (GQTGSGKT). Residues Ser-465, Ser-567, and Ser-579 each carry the phosphoserine modification. A coiled-coil region spans residues 564–604 (GNLSKEEEELSSQMSSFNEAMTQIRELEERAVEELKEIIQQ).

It belongs to the TRAFAC class myosin-kinesin ATPase superfamily. Kinesin family. MCAK/KIF2 subfamily. Interacts with CENPH. Interacts with MTUS2/TIP150; the interaction is direct. Interacts with MAPRE1; the interaction is direct, regulated by phosphorylation and is probably required for targeting to growing microtubule plus ends. Interacts with KIF18B at microtubule tips; this interaction increases the affinity of both partners for microtubule plus ends and is required for robust microtubule depolymerization. Phosphorylation by AURKA or AURKB strongly reduces KIF18B-binding. Phosphorylation by AURKB, regulates association with centromeres and kinetochores and the microtubule depolymerization activity. Post-translationally, ubiquitinated.

The protein resides in the cytoplasm. The protein localises to the cytoskeleton. It localises to the nucleus. Its subcellular location is the chromosome. It is found in the centromere. The protein resides in the kinetochore. Its function is as follows. In complex with KIF18B, constitutes the major microtubule plus-end depolymerizing activity in mitotic cells. Regulates the turnover of microtubules at the kinetochore and functions in chromosome segregation during mitosis. Plays a role in chromosome congression and is required for the lateral to end-on conversion of the chromosome-microtubule attachment. The protein is Kinesin-like protein KIF2C (KIF2C) of Macaca fascicularis (Crab-eating macaque).